The sequence spans 593 residues: Myc box-dependent-interacting protein 1 (593 aa).

Position 2 is an N-acetylalanine (Ala2). An interaction with BIN2 region spans residues 2-122 (AEMGSKGVTA…DYHQKLVDQA (121 aa)). 2 coiled-coil regions span residues 15 to 42 (ASNV…TKDE) and 193 to 267 (HLVA…NDVL). In terms of domain architecture, BAR spans 29 to 276 (VLQKLGKADE…LVGLEKQHGS (248 aa)). 2 disordered regions span residues 280-354 (TVKA…KEVK) and 400-488 (PVTS…AASS). Residues Ser296, Ser298, and Ser303 each carry the phosphoserine modification. Phosphothreonine is present on residues Thr307 and Thr323. Ser331 is subject to Phosphoserine. Residues 378–421 (FEAPGPFSEQASLLDLDFDPLPPVTSPVKAPTPSGQSIPWDLWE) form a clathrin-binding region. The region spanning 520–593 (GFMFKVQAQH…FPENFTERVP (74 aa)) is the SH3 domain.

As to quaternary structure, heterodimer with AMPH. Binds SH3GLB1. Interacts (via SH3 domain) with DNM1. Interacts with SYNJ1. Interacts (via SH3 domain) with DNM2. Isoform IIA interacts with CLTC. Isoform IIB does not interact with CLTC. Isoform IIC1 does not interact with CLTC. Isoform IIC2 does not interact with CLTC. Interacts with AP2A2. Interacts with AP2B1. Interacts with MYC (via N-terminal transactivation domain); the interaction requires the integrity of the conserved MYC box regions 1 and 2. Interacts with BIN2. Interacts with SNX4. Interacts (via BAR domain) with BACE1. Binds (via BAR domain) F-actin. In terms of assembly, (Microbial infection) Interacts (SH3 domain) with HCV NS5A. In terms of processing, phosphorylated by protein kinase C. In terms of tissue distribution, ubiquitous. Highest expression in the brain and muscle. Expressed in oligodendrocytes. Isoform IIA is expressed only in the brain, where it is detected in the gray matter, but not in the white matter. Isoform BIN1 is widely expressed with highest expression in skeletal muscle.

It is found in the nucleus. The protein resides in the cytoplasm. The protein localises to the endosome. It localises to the cell membrane. Its subcellular location is the sarcolemma. It is found in the T-tubule. Is a key player in the control of plasma membrane curvature, membrane shaping and membrane remodeling. Required in muscle cells for the formation of T-tubules, tubular invaginations of the plasma membrane that function in depolarization-contraction coupling. Is a negative regulator of endocytosis. Is also involved in the regulation of intracellular vesicles sorting, modulation of BACE1 trafficking and the control of amyloid-beta production. In neuronal circuits, endocytosis regulation may influence the internalization of PHF-tau aggregates. May be involved in the regulation of MYC activity and the control cell proliferation. Has actin bundling activity and stabilizes actin filaments against depolymerization in vitro. In Homo sapiens (Human), this protein is Myc box-dependent-interacting protein 1 (BIN1).